A 129-amino-acid chain; its full sequence is uncharacterized protein (129 aa).

The span at alanine 91 to serine 114 shows a compositional bias: basic and acidic residues. Positions alanine 91–lysine 129 are disordered.

This sequence belongs to the LEA type 1 family.

This is an uncharacterized protein from Haemophilus influenzae (strain ATCC 51907 / DSM 11121 / KW20 / Rd).